Consider the following 302-residue polypeptide: Probable alpha-L-glutamate ligase (302 aa).

One can recognise an ATP-grasp domain in the interval 112-294 (LQLLLKAGIP…IAAEIIDYIE (183 aa)). Residues lysine 148, 185–186 (DF), aspartate 194, and 218–220 (RAN) contribute to the ATP site. Mg(2+) contacts are provided by aspartate 255, glutamate 267, and asparagine 269. Mn(2+) contacts are provided by aspartate 255, glutamate 267, and asparagine 269.

This sequence belongs to the RimK family. Mg(2+) serves as cofactor. Mn(2+) is required as a cofactor.

In Haemophilus influenzae (strain ATCC 51907 / DSM 11121 / KW20 / Rd), this protein is Probable alpha-L-glutamate ligase.